The chain runs to 540 residues: Gamma-cadinene synthase (540 aa).

Mg(2+) contacts are provided by D292, D296, D436, S440, and E444. The DDXXD motif signature appears at 292-296; sequence DDTYD.

The protein belongs to the terpene synthase family. It depends on Mg(2+) as a cofactor. The cofactor is Mn(2+).

The catalysed reaction is (2E,6E)-farnesyl diphosphate = (+)-gamma-cadinene + diphosphate. It functions in the pathway secondary metabolite biosynthesis; terpenoid biosynthesis. In terms of biological role, sesquiterpene synthase that catalyzes the cyclization of trans,trans-farnesyl diphosphate (FPP) to gamma cadinene. The protein is Gamma-cadinene synthase (CDS) of Ocimum basilicum (Sweet basil).